A 102-amino-acid polypeptide reads, in one-letter code: Putative pterin-4-alpha-carbinolamine dehydratase (102 aa).

This sequence belongs to the pterin-4-alpha-carbinolamine dehydratase family.

The enzyme catalyses (4aS,6R)-4a-hydroxy-L-erythro-5,6,7,8-tetrahydrobiopterin = (6R)-L-erythro-6,7-dihydrobiopterin + H2O. This Burkholderia cenocepacia (strain ATCC BAA-245 / DSM 16553 / LMG 16656 / NCTC 13227 / J2315 / CF5610) (Burkholderia cepacia (strain J2315)) protein is Putative pterin-4-alpha-carbinolamine dehydratase.